Here is a 159-residue protein sequence, read N- to C-terminus: Cyclic pyranopterin monophosphate synthase (159 aa).

Residues leucine 76–histidine 78 and methionine 114–glutamate 115 contribute to the substrate site. Aspartate 129 is a catalytic residue.

This sequence belongs to the MoaC family. Homohexamer; trimer of dimers.

It catalyses the reaction (8S)-3',8-cyclo-7,8-dihydroguanosine 5'-triphosphate = cyclic pyranopterin phosphate + diphosphate. Its pathway is cofactor biosynthesis; molybdopterin biosynthesis. Its function is as follows. Catalyzes the conversion of (8S)-3',8-cyclo-7,8-dihydroguanosine 5'-triphosphate to cyclic pyranopterin monophosphate (cPMP). The sequence is that of Cyclic pyranopterin monophosphate synthase from Psychromonas ingrahamii (strain DSM 17664 / CCUG 51855 / 37).